The following is a 251-amino-acid chain: Probable transcriptional regulatory protein SYNPCC7002_A0851 (251 aa).

A Response regulatory domain is found at 20–141 (RILVVEDEAV…ELVARCRALL (122 aa)). Asp76 carries the 4-aspartylphosphate modification. The ompR/PhoB-type DNA-binding region spans 153–251 (NSVRQFKDIS…TVRGFGYRFG (99 aa)).

Post-translationally, phosphorylation.

This Picosynechococcus sp. (strain ATCC 27264 / PCC 7002 / PR-6) (Agmenellum quadruplicatum) protein is Probable transcriptional regulatory protein SYNPCC7002_A0851.